The chain runs to 723 residues: Peroxisomal bifunctional enzyme (723 aa).

An enoyl-CoA hydratase / isomerase region spans residues 1–282; that stretch reads MAEYTRLHNA…FAERKANKWS (282 aa). Residue Lys38 is modified to N6-succinyllysine. Residue Gly101 coordinates substrate. At Lys165 the chain carries N6-acetyllysine; alternate. The residue at position 165 (Lys165) is an N6-succinyllysine; alternate. Lys171 is subject to N6-acetyllysine. At Lys219 the chain carries N6-acetyllysine; alternate. Lys219 carries the post-translational modification N6-succinyllysine; alternate. Lys250 is subject to N6-acetyllysine. An N6-succinyllysine mark is found at Lys280 and Lys290. The segment at 283–572 is 3-hydroxyacyl-CoA dehydrogenase; that stretch reads TPSGASWKTA…DVLCELGRFG (290 aa). Lys346, Lys350, and Lys464 each carry N6-acetyllysine. Lys532 is subject to N6-succinyllysine. The residue at position 548 (Thr548) is a Phosphothreonine. Lys577 bears the N6-succinyllysine mark. N6-acetyllysine; alternate occurs at positions 584, 591, and 710. An N6-succinyllysine; alternate mark is found at Lys584, Lys591, and Lys710. Phosphoserine is present on Ser718. Positions 721-723 match the Microbody targeting signal motif; it reads SKL. The residue at position 722 (Lys722) is an N6-succinyllysine.

In the N-terminal section; belongs to the enoyl-CoA hydratase/isomerase family. This sequence in the C-terminal section; belongs to the 3-hydroxyacyl-CoA dehydrogenase family. Monomer. Acetylated, leading to enhanced enzyme activity. Acetylation is enhanced by up to 80% after treatment either with trichostin A (TSA) or with nicotinamide (NAM) with highest increase on Lys-346. Acetylation and enzyme activity increased by about 1.5% on addition of fatty acids. In terms of tissue distribution, liver and kidney. Strongly expressed in the terminal segments of the proximal tubule. Lower amounts seen in the brain.

It is found in the peroxisome. It carries out the reaction a (3S)-3-hydroxyacyl-CoA = a (2E)-enoyl-CoA + H2O. It catalyses the reaction a 4-saturated-(3S)-3-hydroxyacyl-CoA = a (3E)-enoyl-CoA + H2O. The catalysed reaction is a (3Z)-enoyl-CoA = a 4-saturated (2E)-enoyl-CoA. The enzyme catalyses a (3E)-enoyl-CoA = a 4-saturated (2E)-enoyl-CoA. It carries out the reaction a (3S)-3-hydroxyacyl-CoA + NAD(+) = a 3-oxoacyl-CoA + NADH + H(+). It catalyses the reaction (2S,3S)-3-hydroxy-2-methylbutanoyl-CoA = (2E)-2-methylbut-2-enoyl-CoA + H2O. The catalysed reaction is (3S)-hydroxyhexadecanoyl-CoA + NAD(+) = 3-oxohexadecanoyl-CoA + NADH + H(+). The enzyme catalyses (3S)-hydroxyhexadecanoyl-CoA = (2E)-hexadecenoyl-CoA + H2O. It carries out the reaction (2E)-hexadecenedioyl-CoA + H2O = (3S)-hydroxyhexadecanedioyl-CoA. It catalyses the reaction (3S)-hydroxyhexadecanedioyl-CoA + NAD(+) = 3-oxohexadecanedioyl-CoA + NADH + H(+). The catalysed reaction is (3E,5Z)-tetradecadienoyl-CoA = (2E,5Z)-tetradecadienoyl-CoA. The enzyme catalyses (3E,5Z)-octadienoyl-CoA = (2E,5Z)-octadienoyl-CoA. It carries out the reaction (3S)-hydroxydecanoyl-CoA + NAD(+) = 3-oxodecanoyl-CoA + NADH + H(+). It catalyses the reaction (3E)-decenoyl-CoA = (2E)-decenoyl-CoA. The catalysed reaction is (3Z)-hexenoyl-CoA = (2E)-hexenoyl-CoA. The enzyme catalyses (3E)-hexenoyl-CoA = (2E)-hexenoyl-CoA. It carries out the reaction (3S)-hydroxydecanoyl-CoA = (2E)-decenoyl-CoA + H2O. It catalyses the reaction (3S)-hydroxyhexanoyl-CoA = (2E)-hexenoyl-CoA + H2O. The protein operates within lipid metabolism; fatty acid beta-oxidation. Enzyme activity enhanced by acetylation. Functionally, peroxisomal trifunctional enzyme possessing 2-enoyl-CoA hydratase, 3-hydroxyacyl-CoA dehydrogenase, and delta 3, delta 2-enoyl-CoA isomerase activities. Catalyzes two of the four reactions of the long chain fatty acids peroxisomal beta-oxidation pathway. Can also use branched-chain fatty acids such as 2-methyl-2E-butenoyl-CoA as a substrate, which is hydrated into (2S,3S)-3-hydroxy-2-methylbutanoyl-CoA. Optimal isomerase for 2,5 double bonds into 3,5 form isomerization in a range of enoyl-CoA species. Also able to isomerize both 3-cis and 3-trans double bonds into the 2-trans form in a range of enoyl-CoA species. With HSD17B4, catalyzes the hydration of trans-2-enoyl-CoA and the dehydrogenation of 3-hydroxyacyl-CoA, but with opposite chiral specificity. Regulates the amount of medium-chain dicarboxylic fatty acids which are essential regulators of all fatty acid oxidation pathways. Also involved in the degradation of long-chain dicarboxylic acids through peroxisomal beta-oxidation. The sequence is that of Peroxisomal bifunctional enzyme from Homo sapiens (Human).